The sequence spans 600 residues: Arginine--tRNA ligase (600 aa).

Residues Ser-151 to Asn-153, His-162, Tyr-332, Asp-336, and Gln-360 each bind L-arginine. The 'HIGH' region signature appears at Pro-152 to His-162.

It belongs to the class-I aminoacyl-tRNA synthetase family.

The catalysed reaction is tRNA(Arg) + L-arginine + ATP = L-arginyl-tRNA(Arg) + AMP + diphosphate. The chain is Arginine--tRNA ligase (RARS) from Acanthamoeba polyphaga mimivirus (APMV).